The following is a 115-amino-acid chain: Photosystem II reaction center Psb28 protein (115 aa).

It belongs to the Psb28 family. As to quaternary structure, part of the photosystem II complex.

It is found in the plastid. Its subcellular location is the chloroplast thylakoid membrane. The polypeptide is Photosystem II reaction center Psb28 protein (Cyanidium caldarium (Red alga)).